The sequence spans 203 residues: Holliday junction branch migration complex subunit RuvA (203 aa).

Residues 1-64 (MIGRLRGIVL…EDAQLLFGFN (64 aa)) form a domain I region. The segment at 65–142 (NKQERTLFRE…KGLHGDLFTP (78 aa)) is domain II. The tract at residues 143-154 (AADLVLTSPASP) is flexible linker. Residues 155–203 (AVDDAEAEAVAALVSLGYKPQEASRMVSKVAQADASSETLIREALRAAL) are domain III.

This sequence belongs to the RuvA family. As to quaternary structure, homotetramer. Forms an RuvA(8)-RuvB(12)-Holliday junction (HJ) complex. HJ DNA is sandwiched between 2 RuvA tetramers; dsDNA enters through RuvA and exits via RuvB. An RuvB hexamer assembles on each DNA strand where it exits the tetramer. Each RuvB hexamer is contacted by two RuvA subunits (via domain III) on 2 adjacent RuvB subunits; this complex drives branch migration. In the full resolvosome a probable DNA-RuvA(4)-RuvB(12)-RuvC(2) complex forms which resolves the HJ.

It localises to the cytoplasm. The RuvA-RuvB-RuvC complex processes Holliday junction (HJ) DNA during genetic recombination and DNA repair, while the RuvA-RuvB complex plays an important role in the rescue of blocked DNA replication forks via replication fork reversal (RFR). RuvA specifically binds to HJ cruciform DNA, conferring on it an open structure. The RuvB hexamer acts as an ATP-dependent pump, pulling dsDNA into and through the RuvAB complex. HJ branch migration allows RuvC to scan DNA until it finds its consensus sequence, where it cleaves and resolves the cruciform DNA. The protein is Holliday junction branch migration complex subunit RuvA of Cronobacter sakazakii (strain ATCC BAA-894) (Enterobacter sakazakii).